The following is a 337-amino-acid chain: 1-aminocyclopropane-1-carboxylate deaminase (337 aa).

The residue at position 50 (K50) is an N6-(pyridoxal phosphate)lysine. S77 functions as the Nucleophile in the catalytic mechanism.

It belongs to the ACC deaminase/D-cysteine desulfhydrase family. As to quaternary structure, homotrimer. Pyridoxal 5'-phosphate is required as a cofactor.

The enzyme catalyses 1-aminocyclopropane-1-carboxylate + H2O = 2-oxobutanoate + NH4(+). Its function is as follows. Catalyzes a cyclopropane ring-opening reaction, the irreversible conversion of 1-aminocyclopropane-1-carboxylate (ACC) to ammonia and alpha-ketobutyrate. Allows growth on ACC as a nitrogen source. This is 1-aminocyclopropane-1-carboxylate deaminase from Bradyrhizobium diazoefficiens (strain JCM 10833 / BCRC 13528 / IAM 13628 / NBRC 14792 / USDA 110).